Consider the following 416-residue polypeptide: MFQDVLVITVAAGRGGDGAVSFRREKFVPKGGPDGGDGGRGGSVYLRARGSVDSLSRLSKRTYKAEDGEHGRGSQQHGRGGEDLVIEVPRGTRVFDADTGELLADLTEEGQTVLVARGGAGGRGNMHFVSPTRQAPRFAEAGEEGEKRRLRLELMLIADVGLVGYPNAGKSSLLAAMTRAHPKIAPYPFTTLSPNLGVVEVSEEERFTLADIPGIIEGASEGKGLGLEFLRHIARTRVLLYVLDAADEPLKTLETLRKEVGAYDPALLRRPSLVALNKVDLLEEEAVKALADALAREGLAVLPVSALTGAGLPALKEALHALVRSTPPPEMPKPVPRKEVQAGVEVVPVAEGVYEVRAPEVERYLARIKGDLMEAAGYLQEVFRRQGVEAALRAKGVRAGDLVRIGGLEFEYIPEV.

An Obg domain is found at 1–157 (MFQDVLVITV…RRLRLELMLI (157 aa)). Disordered regions lie at residues 25 to 44 (EKFV…GGSV) and 62 to 82 (TYKA…RGGE). Positions 32–42 (GPDGGDGGRGG) are enriched in gly residues. Residues 63–72 (YKAEDGEHGR) show a composition bias toward basic and acidic residues. One can recognise an OBG-type G domain in the interval 158–324 (ADVGLVGYPN…LKEALHALVR (167 aa)). Residues 164–171 (GYPNAGKS), 189–193 (FTTLS), 211–214 (DIPG), 277–280 (NKVD), and 305–307 (SAL) each bind GTP. 2 residues coordinate Mg(2+): Ser171 and Thr191. The 79-residue stretch at 336–414 (PRKEVQAGVE…IGGLEFEYIP (79 aa)) folds into the OCT domain.

The protein belongs to the TRAFAC class OBG-HflX-like GTPase superfamily. OBG GTPase family. As to quaternary structure, monomer. The cofactor is Mg(2+).

The protein localises to the cytoplasm. Its function is as follows. An essential GTPase which binds GTP, GDP and possibly (p)ppGpp with moderate affinity, with high nucleotide exchange rates and a fairly low GTP hydrolysis rate. Plays a role in control of the cell cycle, stress response, ribosome biogenesis and in those bacteria that undergo differentiation, in morphogenesis control. The sequence is that of GTPase Obg from Thermus thermophilus (strain ATCC 27634 / DSM 579 / HB8).